A 1399-amino-acid polypeptide reads, in one-letter code: DNA-directed RNA polymerase subunit beta' (1399 aa).

Zn(2+) contacts are provided by Cys70, Cys72, Cys85, and Cys88. 3 residues coordinate Mg(2+): Asp460, Asp462, and Asp464. Zn(2+) contacts are provided by Cys814, Cys888, Cys895, and Cys898. The tract at residues 1367 to 1399 (SERKRQRDLGKPQRVSASEAEAALTEALNSSGN) is disordered. Residues 1382-1399 (SASEAEAALTEALNSSGN) show a composition bias toward low complexity.

This sequence belongs to the RNA polymerase beta' chain family. In terms of assembly, the RNAP catalytic core consists of 2 alpha, 1 beta, 1 beta' and 1 omega subunit. When a sigma factor is associated with the core the holoenzyme is formed, which can initiate transcription. Mg(2+) serves as cofactor. It depends on Zn(2+) as a cofactor.

It catalyses the reaction RNA(n) + a ribonucleoside 5'-triphosphate = RNA(n+1) + diphosphate. DNA-dependent RNA polymerase catalyzes the transcription of DNA into RNA using the four ribonucleoside triphosphates as substrates. The protein is DNA-directed RNA polymerase subunit beta' of Pseudomonas aeruginosa (strain UCBPP-PA14).